The following is a 119-amino-acid chain: Small ribosomal subunit protein bS16 (119 aa).

It belongs to the bacterial ribosomal protein bS16 family.

This chain is Small ribosomal subunit protein bS16, found in Chlamydia caviae (strain ATCC VR-813 / DSM 19441 / 03DC25 / GPIC) (Chlamydophila caviae).